The primary structure comprises 497 residues: Proline--tRNA ligase (497 aa).

Belongs to the class-II aminoacyl-tRNA synthetase family. ProS type 3 subfamily. In terms of assembly, homodimer.

Its subcellular location is the cytoplasm. The enzyme catalyses tRNA(Pro) + L-proline + ATP = L-prolyl-tRNA(Pro) + AMP + diphosphate. Functionally, catalyzes the attachment of proline to tRNA(Pro) in a two-step reaction: proline is first activated by ATP to form Pro-AMP and then transferred to the acceptor end of tRNA(Pro). The chain is Proline--tRNA ligase from Deinococcus geothermalis (strain DSM 11300 / CIP 105573 / AG-3a).